Consider the following 336-residue polypeptide: Formimidoylglutamase (336 aa).

Residues histidine 129, aspartate 160, histidine 162, aspartate 164, aspartate 257, and aspartate 259 each coordinate Mn(2+).

Belongs to the arginase family. Mn(2+) serves as cofactor.

It catalyses the reaction N-formimidoyl-L-glutamate + H2O = formamide + L-glutamate. It functions in the pathway amino-acid degradation; L-histidine degradation into L-glutamate; L-glutamate from N-formimidoyl-L-glutamate (hydrolase route): step 1/1. Functionally, catalyzes the conversion of N-formimidoyl-L-glutamate to L-glutamate and formamide. The protein is Formimidoylglutamase of Vibrio vulnificus (strain CMCP6).